Reading from the N-terminus, the 122-residue chain is Large ribosomal subunit protein uL14c (122 aa).

Belongs to the universal ribosomal protein uL14 family. Part of the 50S ribosomal subunit.

It localises to the plastid. The protein localises to the chloroplast. In terms of biological role, binds to 23S rRNA. The chain is Large ribosomal subunit protein uL14c from Lactuca sativa (Garden lettuce).